Reading from the N-terminus, the 206-residue chain is Uridine kinase (206 aa).

ATP is bound at residue glycine 9–threonine 16.

Belongs to the uridine kinase family.

The protein resides in the cytoplasm. The enzyme catalyses uridine + ATP = UMP + ADP + H(+). It catalyses the reaction cytidine + ATP = CMP + ADP + H(+). It functions in the pathway pyrimidine metabolism; CTP biosynthesis via salvage pathway; CTP from cytidine: step 1/3. Its pathway is pyrimidine metabolism; UMP biosynthesis via salvage pathway; UMP from uridine: step 1/1. This Borrelia hermsii (strain HS1 / DAH) protein is Uridine kinase.